A 195-amino-acid polypeptide reads, in one-letter code: HTH-type transcriptional regulator BetI (195 aa).

The HTH tetR-type domain occupies 8 to 68 (EIRRAQLIDA…ATMRHVLRDL (61 aa)). Residues 31 to 50 (TLASVAQRASISTGIVSHYF) constitute a DNA-binding region (H-T-H motif).

It functions in the pathway amine and polyamine biosynthesis; betaine biosynthesis via choline pathway [regulation]. Its function is as follows. Repressor involved in the biosynthesis of the osmoprotectant glycine betaine. It represses transcription of the choline transporter BetT and the genes of BetAB involved in the synthesis of glycine betaine. The sequence is that of HTH-type transcriptional regulator BetI from Paraburkholderia xenovorans (strain LB400).